The sequence spans 406 residues: Cysteine desulfurase (406 aa).

N6-(pyridoxal phosphate)lysine is present on lysine 226. Residue cysteine 364 is the Cysteine persulfide intermediate of the active site.

It belongs to the class-V pyridoxal-phosphate-dependent aminotransferase family. Csd subfamily. In terms of assembly, homodimer. Interacts with SufE and the SufBCD complex composed of SufB, SufC and SufD. The interaction with SufE is required to mediate the direct transfer of the sulfur atom from the S-sulfanylcysteine. Pyridoxal 5'-phosphate serves as cofactor.

It localises to the cytoplasm. It carries out the reaction (sulfur carrier)-H + L-cysteine = (sulfur carrier)-SH + L-alanine. The catalysed reaction is L-selenocysteine + AH2 = hydrogenselenide + L-alanine + A + H(+). It functions in the pathway cofactor biosynthesis; iron-sulfur cluster biosynthesis. Cysteine desulfurases mobilize the sulfur from L-cysteine to yield L-alanine, an essential step in sulfur metabolism for biosynthesis of a variety of sulfur-containing biomolecules. Component of the suf operon, which is activated and required under specific conditions such as oxidative stress and iron limitation. Acts as a potent selenocysteine lyase in vitro, that mobilizes selenium from L-selenocysteine. Selenocysteine lyase activity is however unsure in vivo. In Enterobacter sp. (strain 638), this protein is Cysteine desulfurase.